We begin with the raw amino-acid sequence, 291 residues long: ATP synthase gamma chain (291 aa).

The protein belongs to the ATPase gamma chain family. F-type ATPases have 2 components, CF(1) - the catalytic core - and CF(0) - the membrane proton channel. CF(1) has five subunits: alpha(3), beta(3), gamma(1), delta(1), epsilon(1). CF(0) has three main subunits: a, b and c.

It localises to the cell membrane. Its function is as follows. Produces ATP from ADP in the presence of a proton gradient across the membrane. The gamma chain is believed to be important in regulating ATPase activity and the flow of protons through the CF(0) complex. The polypeptide is ATP synthase gamma chain (Buchnera aphidicola subsp. Schizaphis graminum (strain Sg)).